Reading from the N-terminus, the 341-residue chain is Annexin A1 isoform p35 (341 aa).

4 Annexin repeats span residues 37 to 108, 109 to 180, 192 to 263, and 267 to 338; these read FDPS…ALLK, TPAQ…SLAK, ELAE…ALVK, and SKPA…ALCG.

It belongs to the annexin family. In contrast to mammalian homologs, does not contain a tyrosine phosphorylation site in the N-terminal part.

The protein resides in the nucleus. The protein localises to the cytoplasm. It localises to the cell projection. Its subcellular location is the cilium. It is found in the basolateral cell membrane. Calcium/phospholipid-binding protein which promotes membrane fusion and is involved in exocytosis. This protein regulates phospholipase A2 activity. It seems to bind from two to four calcium ions with high affinity. This is Annexin A1 isoform p35 (CP35) from Columba livia (Rock dove).